A 474-amino-acid chain; its full sequence is Alanine/serine racemase (474 aa).

Residues 139 to 140 and Q282 contribute to the pyridoxal 5'-phosphate site; that span reads GS. The residue at position 308 (K308) is an N6-(pyridoxal phosphate)lysine. T336 is a pyridoxal 5'-phosphate binding site.

It belongs to the class-III pyridoxal-phosphate-dependent aminotransferase family. Homohexamer. Pyridoxal 5'-phosphate serves as cofactor.

It catalyses the reaction L-alanine = D-alanine. The catalysed reaction is L-serine = D-serine. With respect to regulation, completely inhibited by hydroxylamine hydrochloride. Functionally, catalyzes the interconversion of L-alanine and D-alanine, and L-serine and D-serine. Has weak activity with valine and threonine. In Pyrococcus horikoshii (strain ATCC 700860 / DSM 12428 / JCM 9974 / NBRC 100139 / OT-3), this protein is Alanine/serine racemase.